A 467-amino-acid polypeptide reads, in one-letter code: Glycine--tRNA ligase (467 aa).

Residues arginine 100 and glutamate 175 each contribute to the substrate site. Residues 207-209, 217-222, 291-292, and 335-338 contribute to the ATP site; these read RNE, FRTREF, EL, and GADR. 222 to 226 contributes to the substrate binding site; it reads FEQME. 331 to 335 contributes to the substrate binding site; that stretch reads EPSLG.

This sequence belongs to the class-II aminoacyl-tRNA synthetase family. As to quaternary structure, homodimer.

It localises to the cytoplasm. The catalysed reaction is tRNA(Gly) + glycine + ATP = glycyl-tRNA(Gly) + AMP + diphosphate. Functionally, catalyzes the attachment of glycine to tRNA(Gly). The protein is Glycine--tRNA ligase of Clostridium perfringens (strain 13 / Type A).